A 472-amino-acid polypeptide reads, in one-letter code: MTVETFKPKQTTTLDIPVKTLEAASTNAVTTGNRIGFVSLGCPKNLVDSERILTQLRIDGYEVTNSYDNADLVIVNTCGFIDAAVEESLDAVREALEENGKVIVTGCLGAKENQIREVHPDVLEITGPHSYEAVLKHVHKYVPKPEHNPFTSLIPQTGVKLTPKHYAYLKISEGCDNRCTFCIIPSLRGDLDSRPAGSILDEAKRLVESGVQEILVVSQDTSAYGKDKGGRTDFWNGMPVKQDITSLARQLGKMGAWVRLHYIYPYPWVDDLIPLMAEGLILPYLDIPMQHASPRILKMMKRPGRVDRQLEAIQRWREICPDLVIRSTFIVGFPGETEEDFQILLDFLKEARLDRVGCFKYSEVDGAVANTIAELISEDVKEDRYHRFMEVQAEISAERLARFVGRTLDILIDDVDEEGAIGRSFADAPEIDGMVFINGETELEPGMLVRARITHSDEHDLWAEVVDADTQD.

Positions Asn33–Pro143 constitute an MTTase N-terminal domain. [4Fe-4S] cluster is bound by residues Cys42, Cys78, Cys107, Cys175, Cys179, and Cys182. Positions Leu161 to Glu398 constitute a Radical SAM core domain. In terms of domain architecture, TRAM spans Ala401–Asp467.

It belongs to the methylthiotransferase family. RimO subfamily. It depends on [4Fe-4S] cluster as a cofactor.

It is found in the cytoplasm. The enzyme catalyses L-aspartate(89)-[ribosomal protein uS12]-hydrogen + (sulfur carrier)-SH + AH2 + 2 S-adenosyl-L-methionine = 3-methylsulfanyl-L-aspartate(89)-[ribosomal protein uS12]-hydrogen + (sulfur carrier)-H + 5'-deoxyadenosine + L-methionine + A + S-adenosyl-L-homocysteine + 2 H(+). Its function is as follows. Catalyzes the methylthiolation of an aspartic acid residue of ribosomal protein uS12. The protein is Ribosomal protein uS12 methylthiotransferase RimO of Shewanella baltica (strain OS185).